Here is a 264-residue protein sequence, read N- to C-terminus: Thymidylate synthase (264 aa).

Arg21 serves as a coordination point for dUMP. Residue His51 participates in (6R)-5,10-methylene-5,6,7,8-tetrahydrofolate binding. 126-127 (RR) serves as a coordination point for dUMP. Catalysis depends on Cys146, which acts as the Nucleophile. DUMP-binding positions include 166–169 (RSAD), Asn177, and 207–209 (HIY). Asp169 contributes to the (6R)-5,10-methylene-5,6,7,8-tetrahydrofolate binding site. A (6R)-5,10-methylene-5,6,7,8-tetrahydrofolate-binding site is contributed by Ser263.

The protein belongs to the thymidylate synthase family. Bacterial-type ThyA subfamily. Homodimer.

It is found in the cytoplasm. The catalysed reaction is dUMP + (6R)-5,10-methylene-5,6,7,8-tetrahydrofolate = 7,8-dihydrofolate + dTMP. The protein operates within pyrimidine metabolism; dTTP biosynthesis. Its function is as follows. Catalyzes the reductive methylation of 2'-deoxyuridine-5'-monophosphate (dUMP) to 2'-deoxythymidine-5'-monophosphate (dTMP) while utilizing 5,10-methylenetetrahydrofolate (mTHF) as the methyl donor and reductant in the reaction, yielding dihydrofolate (DHF) as a by-product. This enzymatic reaction provides an intracellular de novo source of dTMP, an essential precursor for DNA biosynthesis. The polypeptide is Thymidylate synthase (Phocaeicola vulgatus (strain ATCC 8482 / DSM 1447 / JCM 5826 / CCUG 4940 / NBRC 14291 / NCTC 11154) (Bacteroides vulgatus)).